The chain runs to 471 residues: Ammonium transporter Rh type B (471 aa).

The Cytoplasmic portion of the chain corresponds to 1-13 (MAGSPSRAAGRRL). A helical transmembrane segment spans residues 14–33 (QLPLLSFLQGATAVLFAVFV). Residues 34–60 (RYNHKTDAALWHRGNHSNADNEFYFRY) are Extracellular-facing. A glycan (N-linked (GlcNAc...) asparagine) is linked at Asn-48. Residues 61–81 (PSFQDVHAMVFVGFGFLMVFL) form a helical membrane-spanning segment. Residues 82 to 85 (QRYG) lie on the Cytoplasmic side of the membrane. A helical membrane pass occupies residues 86–106 (FSSVGFTFLLAAFALQWSTLV). Over 107–123 (QGFLHSFHGGHIHVGVE) the chain is Extracellular. A helical membrane pass occupies residues 124–144 (SMINADFCAGAVLISFGAVLG). Residues 145 to 148 (KTGP) are Cytoplasmic-facing. The chain crosses the membrane as a helical span at residues 149-169 (AQLLLMALLEVVLFGINEFVL). Residues 170-177 (LHLLGVRD) lie on the Extracellular side of the membrane. The helical transmembrane segment at 178–200 (AGGSMTIHTFGAYFGLVLSQVLY) threads the bilayer. Residues 201 to 217 (RPQLEKSKHRQGLYHSD) lie on the Cytoplasmic side of the membrane. The chain crosses the membrane as a helical span at residues 218 to 238 (LFAMIGTIFLWIFWPSFNAAL). At 239-249 (TSLGAGQHRTA) the chain is on the extracellular side. Residues 250 to 270 (LNTYYSLAASTLGTFALSALV) traverse the membrane as a helical segment. Residues 271–280 (GEDGRLDMVH) lie on the Cytoplasmic side of the membrane. A helical membrane pass occupies residues 281 to 301 (IQNAALAGRVVVGTSSEMMLT). Position 302 (Pro-302) is a topological domain, extracellular. A helical membrane pass occupies residues 303–323 (FGALAAGFLAGTVSTLGYKFF). Residues 324–344 (TPILESKFKVQDTCGVHNLHG) are Cytoplasmic-facing. A helical membrane pass occupies residues 345–365 (MPGVLGVLLGVLVAGLATHEA). Over 366–391 (YGDGLESVFPLIAEGQRSATSQAMYQ) the chain is Extracellular. A helical transmembrane segment spans residues 392 to 412 (LFGLFVTLMFASVGGGLGGLL). Over 413-471 (LKLPFLDSPPDSQCYEDQVHWQAPGATLSPLPTPAFQVPGEHEDKAQRPLRVEEADTQA) the chain is Cytoplasmic. The segment at 414–422 (KLPFLDSPP) is interaction with ANK3. The Basolateral sorting signal signature appears at 427 to 430 (YEDQ). A disordered region spans residues 437–471 (GATLSPLPTPAFQVPGEHEDKAQRPLRVEEADTQA). Residues 452-471 (GEHEDKAQRPLRVEEADTQA) are compositionally biased toward basic and acidic residues.

Belongs to the ammonium transporter (TC 2.A.49) family. Rh subfamily. Interacts (via C-terminus) with ANK2 and ANK3; required for targeting to the basolateral membrane. In terms of processing, N-glycosylated.

Its subcellular location is the cell membrane. It is found in the basolateral cell membrane. It catalyses the reaction NH4(+)(in) = NH4(+)(out). The catalysed reaction is methylamine(out) = methylamine(in). The enzyme catalyses CO2(out) = CO2(in). Its function is as follows. Ammonium transporter involved in the maintenance of acid-base homeostasis. Transports ammonium and its related derivative methylammonium across the basolateral plasma membrane of epithelial cells likely contributing to renal transepithelial ammonia transport and ammonia metabolism. May transport either NH4(+) or NH3 ammonia species predominantly mediating an electrogenic NH4(+) transport. May act as a CO2 channel providing for renal acid secretion. This chain is Ammonium transporter Rh type B (RHBG), found in Pongo pygmaeus (Bornean orangutan).